The sequence spans 373 residues: MKSGRFIGVMSGTSLDGVDVVLAAIDETMVAQQASLTWPIPVHLKKGILDICQGQPLTLSQLGQLDTQLGRLFAQAVNALLAQQRLQPRDIVAIGCHGQTVWHEPTGEAPHTLQIGDNNHIVAHTGITVVGDFRRRDIALGGQGAPLVPAFHHALLGHPTEKRMVLNIGGIANLSLLFPGQAVRGYDTGPGNMLMDAWIWRQCAQPYDKDAAWAKEGQVILPLLQKMLRDPYFAASAPKSTGREYFNYGWLERHLTAFPGADARDVQATLAELTAVSIAQQVLLNGGCERLMVCGGGSRNPLVMARLAALLPGIEVSTTDKAGISGDDMEALAFAWLAWRTLAGLPGNLPSVTGATEASVLGAIYPANPITQS.

An ATP-binding site is contributed by 12–19; that stretch reads GTSLDGVD.

This sequence belongs to the anhydro-N-acetylmuramic acid kinase family.

The enzyme catalyses 1,6-anhydro-N-acetyl-beta-muramate + ATP + H2O = N-acetyl-D-muramate 6-phosphate + ADP + H(+). The protein operates within amino-sugar metabolism; 1,6-anhydro-N-acetylmuramate degradation. It functions in the pathway cell wall biogenesis; peptidoglycan recycling. Its function is as follows. Catalyzes the specific phosphorylation of 1,6-anhydro-N-acetylmuramic acid (anhMurNAc) with the simultaneous cleavage of the 1,6-anhydro ring, generating MurNAc-6-P. Is required for the utilization of anhMurNAc either imported from the medium or derived from its own cell wall murein, and thus plays a role in cell wall recycling. In Salmonella agona (strain SL483), this protein is Anhydro-N-acetylmuramic acid kinase.